The following is a 410-amino-acid chain: Platelet-activating factor acetylhydrolase IB subunit alpha (410 aa).

The segment at M1–D38 is required for self-association and interaction with PAFAH1B2 and PAFAH1B3. Positions M1–M66 are interaction with NDE1. Positions M1 to Y102 are interaction with NDEL1. Residues Q7–M39 form the LisH domain. Position 53 is an N6-acetyllysine (K53). Residues T56–G82 adopt a coiled-coil conformation. The segment at G83 to R410 is interaction with dynein and dynactin. 7 WD repeats span residues G106–K147, G148–T187, G190–T229, G232–E271, E274–T333, G336–N377, and H379–R410. A Phosphoserine modification is found at S109. The interval Y367–C409 is interaction with DCX. The interval F388 to R410 is interaction with NDEL1.

Belongs to the WD repeat LIS1/nudF family. Can self-associate. Component of the cytosolic PAF-AH (I) heterotetrameric enzyme, which is composed of PAFAH1B1 (beta), PAFAH1B2 (alpha2) and PAFAH1B3 (alpha1) subunits. The catalytic activity of the enzyme resides in the alpha1 (PAFAH1B3) and alpha2 (PAFAH1B2) subunits, whereas the beta subunit (PAFAH1B1) has regulatory activity. Trimer formation is not essential for the catalytic activity. Interacts with the catalytic dimer of PAF-AH (I) heterotetrameric enzyme: interacts with PAFAH1B2 homodimer (alpha2/alpha2 homodimer), PAFAH1B3 homodimer (alpha1/alpha1 homodimer) and PAFAH1B2-PAFAH1B3 heterodimer (alpha2/alpha1 heterodimer). Interacts with DCX, dynein, dynactin, IQGAP1, KATNB1, NDE1, NDEL1, NUDC and RSN. Interacts with DISC1, and this interaction is enhanced by NDEL1. Interacts with DAB1 when DAB1 is phosphorylated in response to RELN/reelin signaling. Interacts with INTS13. Interacts with DCDC1.

It is found in the cytoplasm. The protein resides in the cytoskeleton. The protein localises to the microtubule organizing center. It localises to the centrosome. Its subcellular location is the spindle. It is found in the nucleus membrane. Regulatory subunit (beta subunit) of the cytosolic type I platelet-activating factor (PAF) acetylhydrolase (PAF-AH (I)), an enzyme that catalyzes the hydrolyze of the acetyl group at the sn-2 position of PAF and its analogs and participates in PAF inactivation. Regulates the PAF-AH (I) activity in a catalytic dimer composition-dependent manner. Positively regulates the activity of the minus-end directed microtubule motor protein dynein. May enhance dynein-mediated microtubule sliding by targeting dynein to the microtubule plus end. Required for several dynein- and microtubule-dependent processes such as the maintenance of Golgi integrity, the peripheral transport of microtubule fragments and the coupling of the nucleus and centrosome. Required during brain development for the proliferation of neuronal precursors and the migration of newly formed neurons from the ventricular/subventricular zone toward the cortical plate. Neuronal migration involves a process called nucleokinesis, whereby migrating cells extend an anterior process into which the nucleus subsequently translocates. During nucleokinesis dynein at the nuclear surface may translocate the nucleus towards the centrosome by exerting force on centrosomal microtubules. Also required for proper activation of Rho GTPases and actin polymerization at the leading edge of locomoting cerebellar neurons and postmigratory hippocampal neurons in response to calcium influx triggered via NMDA receptors. May also play a role in other forms of cell locomotion including the migration of fibroblasts during wound healing. Required for dynein recruitment to microtubule plus ends and BICD2-bound cargos. May modulate the Reelin pathway through interaction of the PAF-AH (I) catalytic dimer with VLDLR. This is Platelet-activating factor acetylhydrolase IB subunit alpha from Pan troglodytes (Chimpanzee).